Here is a 536-residue protein sequence, read N- to C-terminus: Dual specificity calcium/calmodulin-dependent 3',5'-cyclic nucleotide phosphodiesterase 1B (536 aa).

A disordered region spans residues 1–20; it reads MELSPRSPPEMLEESDCPSP. 2 positions are modified to phosphoserine: Ser7 and Ser15. 2 calmodulin-binding regions span residues 27-47 and 118-141; these read PSKK…KQLE and EKPK…MFRR. One can recognise a PDEase domain in the interval 146 to 503; it reads VGPTYSTAVL…QKWKERAASG (358 aa). His223 serves as the catalytic Proton donor. Residues His227, His263, Asp264, and Asp370 each coordinate Zn(2+). A Mg(2+)-binding site is contributed by Asp264. Disordered regions lie at residues 447 to 474 and 494 to 536; these read LADE…VGDP and QKWK…GNLD. The span at 455 to 464 shows a compositional bias: polar residues; it reads KNQPSFQWRQ. 2 positions are modified to phosphoserine: Ser466 and Ser514.

Belongs to the cyclic nucleotide phosphodiesterase family. PDE1 subfamily. As to quaternary structure, homodimer. The cofactor is Zn(2+). It depends on Mg(2+) as a cofactor.

The protein resides in the cytoplasm. It localises to the cytosol. It carries out the reaction a nucleoside 3',5'-cyclic phosphate + H2O = a nucleoside 5'-phosphate + H(+). The enzyme catalyses 3',5'-cyclic GMP + H2O = GMP + H(+). The catalysed reaction is 3',5'-cyclic AMP + H2O = AMP + H(+). Type I PDE are activated by the binding of calmodulin in the presence of Ca(2+). Functionally, cyclic nucleotide phosphodiesterase with a dual specificity for the second messengers cAMP and cGMP, which are key regulators of many important physiological processes. Has a preference for cGMP as a substrate. The sequence is that of Dual specificity calcium/calmodulin-dependent 3',5'-cyclic nucleotide phosphodiesterase 1B from Homo sapiens (Human).